Here is a 578-residue protein sequence, read N- to C-terminus: Thiol:disulfide interchange protein DsbD (578 aa).

The signal sequence occupies residues Met1–Ala24. Intrachain disulfides connect Cys134–Cys140 and Cys195–Cys317. A run of 9 helical transmembrane segments spans residues Ala183–Ile203, Ile219–Leu239, Tyr256–Tyr276, Gly297–Cys317, Thr318–Gly338, Gly339–Phe359, Trp370–Leu390, Val397–Leu417, and Ala421–Ala441. One can recognise a Thioredoxin domain in the interval Leu438–Arg578. A disulfide bridge connects residues Cys493 and Cys496.

The protein belongs to the thioredoxin family. DsbD subfamily.

It localises to the cell inner membrane. The enzyme catalyses [protein]-dithiol + NAD(+) = [protein]-disulfide + NADH + H(+). The catalysed reaction is [protein]-dithiol + NADP(+) = [protein]-disulfide + NADPH + H(+). Its function is as follows. Required to facilitate the formation of correct disulfide bonds in some periplasmic proteins and for the assembly of the periplasmic c-type cytochromes. Acts by transferring electrons from cytoplasmic thioredoxin to the periplasm. This transfer involves a cascade of disulfide bond formation and reduction steps. This Yersinia enterocolitica serotype O:8 / biotype 1B (strain NCTC 13174 / 8081) protein is Thiol:disulfide interchange protein DsbD.